A 371-amino-acid chain; its full sequence is Histidinol-phosphate aminotransferase (371 aa).

Position 227 is an N6-(pyridoxal phosphate)lysine (lysine 227).

This sequence belongs to the class-II pyridoxal-phosphate-dependent aminotransferase family. Histidinol-phosphate aminotransferase subfamily. As to quaternary structure, homodimer. Pyridoxal 5'-phosphate serves as cofactor.

It catalyses the reaction L-histidinol phosphate + 2-oxoglutarate = 3-(imidazol-4-yl)-2-oxopropyl phosphate + L-glutamate. It participates in amino-acid biosynthesis; L-histidine biosynthesis; L-histidine from 5-phospho-alpha-D-ribose 1-diphosphate: step 7/9. This is Histidinol-phosphate aminotransferase from Sphingopyxis alaskensis (strain DSM 13593 / LMG 18877 / RB2256) (Sphingomonas alaskensis).